The chain runs to 95 residues: Small ribosomal subunit protein uS19 (95 aa).

This sequence belongs to the universal ribosomal protein uS19 family.

Protein S19 forms a complex with S13 that binds strongly to the 16S ribosomal RNA. In Syntrophobacter fumaroxidans (strain DSM 10017 / MPOB), this protein is Small ribosomal subunit protein uS19.